A 157-amino-acid chain; its full sequence is uncharacterized protein (157 aa).

An N-acetyltransferase domain is found at 9–154 (LLINYKTLDE…ETNLNAVTNE (146 aa)).

This is an uncharacterized protein from Bacillus cereus (strain B4264).